We begin with the raw amino-acid sequence, 224 residues long: 7-cyano-7-deazaguanine synthase (224 aa).

Leu-10–Val-20 contacts ATP. Zn(2+)-binding residues include Cys-189, Cys-199, Cys-202, and Cys-205.

The protein belongs to the QueC family. Requires Zn(2+) as cofactor.

It carries out the reaction 7-carboxy-7-deazaguanine + NH4(+) + ATP = 7-cyano-7-deazaguanine + ADP + phosphate + H2O + H(+). It participates in purine metabolism; 7-cyano-7-deazaguanine biosynthesis. Functionally, catalyzes the ATP-dependent conversion of 7-carboxy-7-deazaguanine (CDG) to 7-cyano-7-deazaguanine (preQ(0)). The polypeptide is 7-cyano-7-deazaguanine synthase (Ectopseudomonas mendocina (strain ymp) (Pseudomonas mendocina)).